The following is a 433-amino-acid chain: Histone acetyltransferase type B subunit 2 (433 aa).

5 WD repeats span residues 131 to 171 (EHPG…LDPT), 184 to 224 (GHEA…ADSR), 234 to 274 (HHTQ…TNKA), 281 to 321 (GHLD…EKVH), and 325 to 365 (GHND…EEQL). Positions 367-371 (DDQDD) are interaction with the histone H4 N-terminus. Residues 382–422 (GHTNHLADFSWNPNEPWLVASAAEDNLLQIWKVAESIVGKD) form a WD 6 repeat.

It belongs to the WD repeat RBAP46/RBAP48/MSI1 family. Component of the HAT-B complex composed of at least HAT1 and HAT2. The HAT-B complex binds to histone H4 tail.

Its subcellular location is the cytoplasm. The protein localises to the nucleus. Its function is as follows. Regulatory subunit of the histone acetylase B (HAT-B) complex. The complex acetylates 'Lys-12' of histone H4 which is required for telomeric silencing. This chain is Histone acetyltransferase type B subunit 2 (HAT2), found in Gibberella zeae (strain ATCC MYA-4620 / CBS 123657 / FGSC 9075 / NRRL 31084 / PH-1) (Wheat head blight fungus).